We begin with the raw amino-acid sequence, 187 residues long: Ribonuclease HII (187 aa).

Positions 1–187 constitute an RNase H type-2 domain; sequence MICGTDEAGR…NPVKRLLANL (187 aa). Positions 6, 7, and 98 each coordinate a divalent metal cation.

This sequence belongs to the RNase HII family. Mn(2+) serves as cofactor. Requires Mg(2+) as cofactor.

It localises to the cytoplasm. The catalysed reaction is Endonucleolytic cleavage to 5'-phosphomonoester.. Endonuclease that specifically degrades the RNA of RNA-DNA hybrids. This is Ribonuclease HII from Idiomarina loihiensis (strain ATCC BAA-735 / DSM 15497 / L2-TR).